The sequence spans 219 residues: Guanylate kinase (219 aa).

A Guanylate kinase-like domain is found at 15–194; the sequence is GLMLVISSPS…AFSSVRAIVE (180 aa). ATP is bound at residue 22-29; sequence SPSGAGKS.

This sequence belongs to the guanylate kinase family.

The protein resides in the cytoplasm. It carries out the reaction GMP + ATP = GDP + ADP. Its function is as follows. Essential for recycling GMP and indirectly, cGMP. The protein is Guanylate kinase of Rhizobium meliloti (strain 1021) (Ensifer meliloti).